The primary structure comprises 999 residues: RING finger domain and kelch repeat-containing protein DDB_G0271372 (999 aa).

Residues 7–49 (CPNCLKVFNNPRQLECDHILCTRCIEGVYNPGRTPIIKCPVCD) form an RING-type zinc finger. A compositionally biased stretch (low complexity) spans 92 to 143 (STGSSNNNNNNNNNNNNNNNNFVINNSNNKNNGATTTTTTTTTTTNSNSNST). Disordered stretches follow at residues 92-147 (STGS…KSKV) and 159-209 (ASPK…SSPP). Residues 165 to 196 (GSSQGSLTTINNQKKLTLSPQRASSTTTTSVN) show a composition bias toward polar residues. The B box-type zinc finger occupies 258–302 (AELSKCNDHDQKKFTIFCTDCDQLLCDECLNNNQQQHENHQLNKI). Zn(2+) contacts are provided by C263, H266, C286, and H294. Positions 355 to 402 (DIDTMIENLKERKNALISQIDKEYEEQKLELKDQIETINTTIVDIQNN) form a coiled coil. Low complexity-rich tracts occupy residues 485 to 516 (GVSS…IITT) and 526 to 536 (SPSPTSSSSST). Residues 485-637 (GVSSSPTGTG…TSTNGSNTKI (153 aa)) form a disordered region. Polar residues predominate over residues 552–612 (LSSQNYDNFG…SHGSKLNDNI (61 aa)). Residues 613 to 635 (NTNNNNSPSPTSSSTTSTNGSNT) show a composition bias toward low complexity. Kelch repeat units follow at residues 655-700 (ITAR…YDNN), 702-745 (TIYR…VFDG), 748-793 (YIYL…YHPT), 796-842 (CIYV…FDGS), and 844-892 (YINI…SMNL). Low complexity predominate over residues 904 to 924 (NSFSSISSHSSLNSSSSNNGI). Residues 904 to 936 (NSFSSISSHSSLNSSSSNNGISGSGGSGGDNEI) are disordered.

The polypeptide is RING finger domain and kelch repeat-containing protein DDB_G0271372 (Dictyostelium discoideum (Social amoeba)).